Consider the following 66-residue polypeptide: KEGYLVNHSTGCKYECFKLGDNDYCLRECKQQYGKGAGGYCYAFGCWCTHLYEQAVVWPLPKKTCN.

An LCN-type CS-alpha/beta domain is found at 1 to 66; it reads KEGYLVNHST…VWPLPKKTCN (66 aa). 4 disulfide bridges follow: Cys-12–Cys-65, Cys-16–Cys-41, Cys-25–Cys-46, and Cys-29–Cys-48.

In terms of tissue distribution, expressed by the venom gland.

The protein resides in the secreted. Its function is as follows. Beta toxins bind voltage-independently at site-4 of sodium channels (Nav) and shift the voltage of activation toward more negative potentials thereby affecting sodium channel activation and promoting spontaneous and repetitive firing. This toxin acts on human Nav1.6/SCN8A voltage-gated sodium channels. In vivo, is lethal to mice 40 minutes after intraperitoneal injection at a dose of 5ug. No activity is observed when injected into crickets or woodlice. In Centruroides ornatus (Scorpion), this protein is Beta-mammal toxin Co1.